Consider the following 359-residue polypeptide: Histidinol-phosphate aminotransferase 1 (359 aa).

K216 carries the N6-(pyridoxal phosphate)lysine modification.

It belongs to the class-II pyridoxal-phosphate-dependent aminotransferase family. Histidinol-phosphate aminotransferase subfamily. Homodimer. Pyridoxal 5'-phosphate is required as a cofactor.

The catalysed reaction is L-histidinol phosphate + 2-oxoglutarate = 3-(imidazol-4-yl)-2-oxopropyl phosphate + L-glutamate. Its pathway is amino-acid biosynthesis; L-histidine biosynthesis; L-histidine from 5-phospho-alpha-D-ribose 1-diphosphate: step 7/9. The chain is Histidinol-phosphate aminotransferase 1 (hisC1) from Caulobacter vibrioides (strain ATCC 19089 / CIP 103742 / CB 15) (Caulobacter crescentus).